The following is a 411-amino-acid chain: Carbohydrate sulfotransferase 1 (411 aa).

Topologically, residues 1–2 (MQ) are cytoplasmic. The helical; Signal-anchor for type II membrane protein transmembrane segment at 3-23 (CSWKAVLLLALASIAIQYTAI) threads the bilayer. Topologically, residues 24–411 (RTFTAKSFHT…VEERDFRPFL (388 aa)) are lumenal. Asn56 carries N-linked (GlcNAc...) asparagine glycosylation. 69 to 75 (TRSGSSF) is a 3'-phosphoadenylyl sulfate binding site. N-linked (GlcNAc...) asparagine glycans are attached at residues Asn145 and Asn189. 234 to 242 (RDPRGILAS) contacts 3'-phosphoadenylyl sulfate. Asn334 carries an N-linked (GlcNAc...) asparagine glycan. Residues 337 to 339 (RGD) carry the Cell attachment site motif.

It belongs to the sulfotransferase 1 family. Gal/GlcNAc/GalNAc subfamily. In terms of tissue distribution, broadly expressed with highest levels in central nervous system. Expressed in cortex (at protein level). Expressed in high endothelial venules in peripheral lymph nodes, mesenteric lymph nodes and Peyer's patches.

The protein localises to the golgi apparatus membrane. It carries out the reaction 3'-phosphoadenylyl sulfate + keratan = adenosine 3',5'-bisphosphate + keratan 6'-sulfate.. It participates in glycan metabolism. Its function is as follows. Sulfotransferase that utilizes 3'-phospho-5'-adenylyl sulfate (PAPS) as sulfonate donor to catalyze the transfer of sulfate to position 6 of internal galactose (Gal) residues of keratan. Cooperates with B4GALT4 and B3GNT7 glycosyltransferases and CHST6 sulfotransferase to construct and elongate disulfated disaccharide unit [-&gt;3(6-sulfoGalbeta)1-&gt;4(6-sulfoGlcNAcbeta)1-&gt;] within keratan sulfate polymer. Has a preference for sulfating keratan sulfate, but it also transfers sulfate to the unsulfated polymer. Involved in biosynthesis of phosphacan, a major keratan sulfate proteoglycan in the developing brain. Involved in biosynthesis of 6-sulfoGalbeta-containing O-linked glycans in high endothelial venules of lymph nodes. May act in a synergistic manner with CHST4 to generate sialyl 6',6-disulfo Lewis X motif, a recognition determinant for immune cell receptors implicated in leukocyte trafficking. Catalyzes sulfation of N-acetyllactosamine (LacNAc) oligosaccharides with highest efficiency for sialylated LacNAc structures. This chain is Carbohydrate sulfotransferase 1 (Chst1), found in Mus musculus (Mouse).